The primary structure comprises 250 residues: MSDDLDVLWISSSPVLQRFDKPLLQYISKDVNVAQWEYRHHRDEGSSIDEAVDLLAEFMGQCPYPVNLAGHAAGGAIALSFARRYPKKVRSLSLLAVASQPANTWHAHYYLQRQLFTISREQILANTVRNLFGEQPSHTTKKLVAVLDRDLEQSPLLHSLFKLVHLPEGGVNMPLMICGSKNDPIVSSTTLQDWSNCLKPEDHLWECPKGHHFFHYFYPQTVGDQLLNFWQLRHLQPMQTSYLVSHHWQN.

To Synechocystis PCC 6803 sll0249.

This is an uncharacterized protein from Nostoc sp. (strain PCC 7120 / SAG 25.82 / UTEX 2576).